The sequence spans 316 residues: Acetyl-coenzyme A carboxylase carboxyl transferase subunit alpha (316 aa).

The 268-residue stretch at 24 to 291 (NIKDKADIVD…KEALIQQLNE (268 aa)) folds into the CoA carboxyltransferase C-terminal domain.

Belongs to the AccA family. In terms of assembly, acetyl-CoA carboxylase is a heterohexamer composed of biotin carboxyl carrier protein (AccB), biotin carboxylase (AccC) and two subunits each of ACCase subunit alpha (AccA) and ACCase subunit beta (AccD).

It localises to the cytoplasm. The catalysed reaction is N(6)-carboxybiotinyl-L-lysyl-[protein] + acetyl-CoA = N(6)-biotinyl-L-lysyl-[protein] + malonyl-CoA. The protein operates within lipid metabolism; malonyl-CoA biosynthesis; malonyl-CoA from acetyl-CoA: step 1/1. Functionally, component of the acetyl coenzyme A carboxylase (ACC) complex. First, biotin carboxylase catalyzes the carboxylation of biotin on its carrier protein (BCCP) and then the CO(2) group is transferred by the carboxyltransferase to acetyl-CoA to form malonyl-CoA. The chain is Acetyl-coenzyme A carboxylase carboxyl transferase subunit alpha from Ruthia magnifica subsp. Calyptogena magnifica.